The primary structure comprises 95 residues: Aspartyl/glutamyl-tRNA(Asn/Gln) amidotransferase subunit C (95 aa).

This sequence belongs to the GatC family. As to quaternary structure, heterotrimer of A, B and C subunits.

It catalyses the reaction L-glutamyl-tRNA(Gln) + L-glutamine + ATP + H2O = L-glutaminyl-tRNA(Gln) + L-glutamate + ADP + phosphate + H(+). It carries out the reaction L-aspartyl-tRNA(Asn) + L-glutamine + ATP + H2O = L-asparaginyl-tRNA(Asn) + L-glutamate + ADP + phosphate + 2 H(+). Its function is as follows. Allows the formation of correctly charged Asn-tRNA(Asn) or Gln-tRNA(Gln) through the transamidation of misacylated Asp-tRNA(Asn) or Glu-tRNA(Gln) in organisms which lack either or both of asparaginyl-tRNA or glutaminyl-tRNA synthetases. The reaction takes place in the presence of glutamine and ATP through an activated phospho-Asp-tRNA(Asn) or phospho-Glu-tRNA(Gln). This Pseudomonas putida (strain W619) protein is Aspartyl/glutamyl-tRNA(Asn/Gln) amidotransferase subunit C.